Here is a 364-residue protein sequence, read N- to C-terminus: Histidinol-phosphate aminotransferase (364 aa).

N6-(pyridoxal phosphate)lysine is present on Lys220.

The protein belongs to the class-II pyridoxal-phosphate-dependent aminotransferase family. Histidinol-phosphate aminotransferase subfamily. Homodimer. The cofactor is pyridoxal 5'-phosphate.

It catalyses the reaction L-histidinol phosphate + 2-oxoglutarate = 3-(imidazol-4-yl)-2-oxopropyl phosphate + L-glutamate. The protein operates within amino-acid biosynthesis; L-histidine biosynthesis; L-histidine from 5-phospho-alpha-D-ribose 1-diphosphate: step 7/9. The protein is Histidinol-phosphate aminotransferase of Stenotrophomonas maltophilia (strain R551-3).